A 196-amino-acid chain; its full sequence is dTTP/UTP pyrophosphatase (196 aa).

Catalysis depends on D73, which acts as the Proton acceptor.

This sequence belongs to the Maf family. YhdE subfamily. The cofactor is a divalent metal cation.

The protein localises to the cytoplasm. It catalyses the reaction dTTP + H2O = dTMP + diphosphate + H(+). The enzyme catalyses UTP + H2O = UMP + diphosphate + H(+). Its function is as follows. Nucleoside triphosphate pyrophosphatase that hydrolyzes dTTP and UTP. May have a dual role in cell division arrest and in preventing the incorporation of modified nucleotides into cellular nucleic acids. The sequence is that of dTTP/UTP pyrophosphatase from Myxococcus xanthus (strain DK1622).